We begin with the raw amino-acid sequence, 173 residues long: T-complex protein 1 subunit alpha (173 aa).

It belongs to the TCP-1 chaperonin family. As to quaternary structure, component of the chaperonin-containing T-complex (TRiC), a heterooligomeric complex of about 850 to 900 kDa that forms two stacked rings, 12 to 16 nm in diameter.

It localises to the cytoplasm. Its subcellular location is the cytosol. Component of the chaperonin-containing T-complex (TRiC), a molecular chaperone complex that assists the folding of proteins upon ATP hydrolysis. This chain is T-complex protein 1 subunit alpha, found in Ambystoma mexicanum (Axolotl).